The sequence spans 302 residues: 4-diphosphocytidyl-2-C-methyl-D-erythritol kinase (302 aa).

The active site involves lysine 11. 93–103 serves as a coordination point for ATP; the sequence is PVASGLAGGST. Aspartate 135 is a catalytic residue.

Belongs to the GHMP kinase family. IspE subfamily.

It carries out the reaction 4-CDP-2-C-methyl-D-erythritol + ATP = 4-CDP-2-C-methyl-D-erythritol 2-phosphate + ADP + H(+). It participates in isoprenoid biosynthesis; isopentenyl diphosphate biosynthesis via DXP pathway; isopentenyl diphosphate from 1-deoxy-D-xylulose 5-phosphate: step 3/6. In terms of biological role, catalyzes the phosphorylation of the position 2 hydroxy group of 4-diphosphocytidyl-2C-methyl-D-erythritol. The polypeptide is 4-diphosphocytidyl-2-C-methyl-D-erythritol kinase (Gloeobacter violaceus (strain ATCC 29082 / PCC 7421)).